The following is a 608-amino-acid chain: Alpha-1,3-galactosidase A (608 aa).

Residues 1-21 form the signal peptide; that stretch reads MQRRTFIKSISAMMATSTTLG. Residue C22 is the site of N-palmitoyl cysteine attachment. Residue C22 is the site of S-diacylglycerol cysteine attachment. PbH1 repeat units lie at residues 262–292, 318–340, 426–448, 449–470, and 481–507; these read TKNT…KLDN, KGHV…NVHG, PDHV…LLTV, SGKI…KIGS, and VESV…DIVP.

The protein belongs to the glycosyl hydrolase 110 family. A subfamily.

The protein localises to the cell membrane. The catalysed reaction is Hydrolysis of terminal, non-reducing branched (1-&gt;3)-alpha-D-galactosidic residues, producing free D-galactose.. The enzyme catalyses Hydrolysis of terminal, non-reducing alpha-D-galactose residues in alpha-D-galactosides, including galactose oligosaccharides, galactomannans and galactolipids.. Its function is as follows. Alpha-galactosidase that specifically removes branched alpha-1,3-linked galactose residues present in blood group B antigens. Has no activity toward linear alpha-1,3-linked galactose residues. This is Alpha-1,3-galactosidase A (glaA) from Shewanella woodyi (strain ATCC 51908 / MS32).